The following is a 275-amino-acid chain: Large ribosomal subunit protein uL2c (275 aa).

Disordered regions lie at residues 32–53 (SLSK…TCRH) and 218–242 (PTVR…APIG).

The protein belongs to the universal ribosomal protein uL2 family. In terms of assembly, part of the 50S ribosomal subunit.

The protein localises to the plastid. Its subcellular location is the chloroplast. The polypeptide is Large ribosomal subunit protein uL2c (rpl2) (Tetradesmus obliquus (Green alga)).